The chain runs to 1058 residues: Isoleucine--tRNA ligase (1058 aa).

Positions 48–58 (PYTTGHIHLGT) match the 'HIGH' region motif. The short motif at 596–600 (KMSKS) is the 'KMSKS' region element. Lys-599 is a binding site for ATP.

This sequence belongs to the class-I aminoacyl-tRNA synthetase family. IleS type 2 subfamily. Monomer. The cofactor is Zn(2+).

The protein localises to the cytoplasm. The enzyme catalyses tRNA(Ile) + L-isoleucine + ATP = L-isoleucyl-tRNA(Ile) + AMP + diphosphate. Functionally, catalyzes the attachment of isoleucine to tRNA(Ile). As IleRS can inadvertently accommodate and process structurally similar amino acids such as valine, to avoid such errors it has two additional distinct tRNA(Ile)-dependent editing activities. One activity is designated as 'pretransfer' editing and involves the hydrolysis of activated Val-AMP. The other activity is designated 'posttransfer' editing and involves deacylation of mischarged Val-tRNA(Ile). The sequence is that of Isoleucine--tRNA ligase from Methanosarcina barkeri (strain Fusaro / DSM 804).